An 84-amino-acid chain; its full sequence is UPF0386 protein R01313 (84 aa).

The protein belongs to the UPF0386 family.

The sequence is that of UPF0386 protein R01313 from Rhizobium meliloti (strain 1021) (Ensifer meliloti).